The primary structure comprises 463 residues: Argininosuccinate lyase (463 aa).

The protein belongs to the lyase 1 family. Argininosuccinate lyase subfamily.

Its subcellular location is the cytoplasm. It catalyses the reaction 2-(N(omega)-L-arginino)succinate = fumarate + L-arginine. It functions in the pathway amino-acid biosynthesis; L-arginine biosynthesis; L-arginine from L-ornithine and carbamoyl phosphate: step 3/3. The sequence is that of Argininosuccinate lyase from Chlorobaculum tepidum (strain ATCC 49652 / DSM 12025 / NBRC 103806 / TLS) (Chlorobium tepidum).